We begin with the raw amino-acid sequence, 165 residues long: MSKITLAGTEIEVSGVFPQVGDVVTDFTTVSAKLEDTTLANFAGKRKILNIFPSIDTGICATSVRKFNEQAAKLANTAVLCLSTDLPFAQARFCGAEGLENVFTVSTFRNKDVHKQLGVDIVEGPLAGLTARAVIVLDENNRVLHSELVPEIKQEPNYDAALAVL.

In terms of domain architecture, Thioredoxin spans 18 to 165 (PQVGDVVTDF…PNYDAALAVL (148 aa)). The active-site Cysteine sulfenic acid (-SOH) intermediate is the C60. C60 and C94 form a disulfide bridge.

This sequence belongs to the peroxiredoxin family. Tpx subfamily. In terms of assembly, homodimer.

The catalysed reaction is a hydroperoxide + [thioredoxin]-dithiol = an alcohol + [thioredoxin]-disulfide + H2O. In terms of biological role, thiol-specific peroxidase that catalyzes the reduction of hydrogen peroxide and organic hydroperoxides to water and alcohols, respectively. Plays a role in cell protection against oxidative stress by detoxifying peroxides. In Pasteurella multocida (strain Pm70), this protein is Thiol peroxidase.